Here is a 71-residue protein sequence, read N- to C-terminus: UPF0346 protein MGAS2096_Spy0401 (71 aa).

Belongs to the UPF0346 family.

The chain is UPF0346 protein MGAS2096_Spy0401 from Streptococcus pyogenes serotype M12 (strain MGAS2096).